Reading from the N-terminus, the 128-residue chain is Fumarate reductase subunit C (128 aa).

3 consecutive transmembrane segments (helical) span residues 31 to 51 (ATCIATIWFCLVLLYGVISLG), 67 to 87 (VVILNIISLAGLLYHAATLYV), and 106 to 126 (ILKNALWAITGLVSLLALVLV).

It belongs to the FrdC family. Part of an enzyme complex containing four subunits: a flavoprotein (FrdA), an iron-sulfur protein (FrdB), and two hydrophobic anchor proteins (FrdC and FrdD).

It localises to the cell inner membrane. Anchors the catalytic components of the fumarate reductase complex to the cell membrane, binds quinones. The protein is Fumarate reductase subunit C of Haemophilus ducreyi (strain 35000HP / ATCC 700724).